A 271-amino-acid polypeptide reads, in one-letter code: Methylcorrinoid:tetrahydrofolate methyltransferase (271 aa).

The Pterin-binding domain maps to 1-247 (MIIIGEKLNG…GAIFATDALL (247 aa)).

This sequence belongs to the vitamin-B12 dependent methionine synthase family. In terms of assembly, the proline betaine:THF methyl transfer system is composed of two methyltransferases, MtpB and MtqA, and the corrinoid protein MtqC. The L-carnitine:THF methyl transfer system is composed of two methyltransferases, MtcB and MtqA, and the corrinoid protein MtqC.

It carries out the reaction methyl-Co(III)-[quaternary-amine-specific corrinoid protein] + (6S)-5,6,7,8-tetrahydrofolate = Co(I)-[quaternary-amine-specific corrinoid protein] + (6S)-5-methyl-5,6,7,8-tetrahydrofolate + H(+). In terms of biological role, involved in the degradation of the quaternary amines L-proline betaine and L-carnitine. Component of a corrinoid-dependent methyltransferase system that transfers a methyl group from L-proline betaine or L-carnitine to tetrahydrofolate (THF), forming methyl-THF, a key intermediate in the Wood-Ljungdahl acetogenesis pathway. MtqA catalyzes the transfer of a methyl group from the methylated corrinoid protein MtqC to THF, forming methyl-THF. This is Methylcorrinoid:tetrahydrofolate methyltransferase from Eubacterium limosum.